The sequence spans 332 residues: MKVAVLGAGAWGTALAGHLAARHDTLLWARDAALIAGLQARHENSRYLDGIALPDALRYDADLGAALAHGAADDALCVIAAPVAGLRTLCHAMRDAGCVPAHVVWVCKGFEADTHLLPHQVIAAELPEQHSNGVLSGPSFAREVGQSLPVALTVASTSAECRERTLAAFHHGAMRIYTGDDVVGVEVGGAVKNVLAIATGIADGLGLGLNARAALITRGLAEMSRLGVALGGRAETFTGLTGLGDLILTATGDLSRNRTVGLQLAAGRTLNDILGALGHVAEGVRCAQAVLAIARAQSIEMPITEAVCGVLFDGIAPRDAVSGLLRRDARAE.

3 residues coordinate NADPH: Trp11, Arg30, and Lys108. Residues Lys108, Gly137, and Ser139 each coordinate sn-glycerol 3-phosphate. Ala141 serves as a coordination point for NADPH. Residues Lys192, Asp245, Ser255, Arg256, and Asn257 each coordinate sn-glycerol 3-phosphate. Catalysis depends on Lys192, which acts as the Proton acceptor. Arg256 contacts NADPH. Positions 280 and 282 each coordinate NADPH.

It belongs to the NAD-dependent glycerol-3-phosphate dehydrogenase family.

The protein localises to the cytoplasm. The enzyme catalyses sn-glycerol 3-phosphate + NAD(+) = dihydroxyacetone phosphate + NADH + H(+). The catalysed reaction is sn-glycerol 3-phosphate + NADP(+) = dihydroxyacetone phosphate + NADPH + H(+). The protein operates within membrane lipid metabolism; glycerophospholipid metabolism. Functionally, catalyzes the reduction of the glycolytic intermediate dihydroxyacetone phosphate (DHAP) to sn-glycerol 3-phosphate (G3P), the key precursor for phospholipid synthesis. This Burkholderia lata (strain ATCC 17760 / DSM 23089 / LMG 22485 / NCIMB 9086 / R18194 / 383) protein is Glycerol-3-phosphate dehydrogenase [NAD(P)+].